The chain runs to 445 residues: Na(+)-translocating NADH-quinone reductase subunit A (445 aa).

This sequence belongs to the NqrA family. In terms of assembly, composed of six subunits; NqrA, NqrB, NqrC, NqrD, NqrE and NqrF.

It carries out the reaction a ubiquinone + n Na(+)(in) + NADH + H(+) = a ubiquinol + n Na(+)(out) + NAD(+). Functionally, NQR complex catalyzes the reduction of ubiquinone-1 to ubiquinol by two successive reactions, coupled with the transport of Na(+) ions from the cytoplasm to the periplasm. NqrA to NqrE are probably involved in the second step, the conversion of ubisemiquinone to ubiquinol. The protein is Na(+)-translocating NADH-quinone reductase subunit A of Pseudomonas aeruginosa (strain ATCC 15692 / DSM 22644 / CIP 104116 / JCM 14847 / LMG 12228 / 1C / PRS 101 / PAO1).